A 697-amino-acid polypeptide reads, in one-letter code: Sodium-dependent phosphate transport protein 2B (697 aa).

The tract at residues 1 to 45 (MAPWPELENAQPNPGKFIEGASGPQSSIPAKDKEASKTNDNGTPV) is disordered. Topologically, residues 1–91 (MAPWPELENA…WSERDTKGKT (91 aa)) are cytoplasmic. Residues 92 to 112 (LCIFQGVGKFILLLGFLYLFV) form a helical membrane-spanning segment. At 113–136 (CSLDVLSSAFQLVGGKVAGQFFSN) the chain is on the extracellular side. A helical membrane pass occupies residues 137-157 (NSIMSNPVAGLVIGVLVTVMV). The Cytoplasmic segment spans residues 158–213 (QSSSTSSSIIVSMVASSLLTVRAAIPIIMGANIGTSITNTIVALMQAGDRNEFRRA). Residues 214 to 234 (FAGATVHDFFNWLSVFVLLPL) traverse the membrane as a helical segment. Topologically, residues 235-363 (EAATHYLEIL…FVNFSLPDLA (129 aa)) are extracellular. N-linked (GlcNAc...) asparagine glycans are attached at residues N295, N308, N321, and N356. A disulfide bond links C303 and C350. A helical membrane pass occupies residues 364–384 (VGIILLTVSLVVLCGCLIMIV). Residues 385–408 (KLLGSVLRGQVATVIKKTLNTDFP) are Cytoplasmic-facing. Residues 409–429 (FPFAWLTGYLAILVGAGMTFI) traverse the membrane as a helical segment. The Extracellular portion of the chain corresponds to 430-486 (VQSSSVFTSAMTPLIGIGVISIERAYPLTLGSNIGTTTTAILAALASPGNTLRSSLQ). A helical membrane pass occupies residues 487–507 (IALCHFFFNISGILLWYPIPF). The Cytoplasmic segment spans residues 508-526 (TRLPIRLAKGLGNISAKYR). A helical transmembrane segment spans residues 527 to 547 (WFAVFYLIFFFFVTPLTVFGL). Residues 548 to 551 (SLAG) lie on the Extracellular side of the membrane. Residues 552-572 (WPVLVGVGVPIILLLLLVLCL) traverse the membrane as a helical segment. The Cytoplasmic portion of the chain corresponds to 573-696 (RMLQFRCPRI…SMKALSNTTV (124 aa)).

This sequence belongs to the SLC34A transporter family. Highly abundant in the ileum of small intestine, whereas it is almost absent in the duodenum and in the jejunum.

Its subcellular location is the apical cell membrane. The enzyme catalyses 3 Na(+)(out) + phosphate(out) = 3 Na(+)(in) + phosphate(in). Involved in actively transporting phosphate into cells via Na(+) cotransport. This is Sodium-dependent phosphate transport protein 2B (Slc34a2) from Mus musculus (Mouse).